Here is a 2793-residue protein sequence, read N- to C-terminus: Iterative polyketide synthase afoE (2793 aa).

Residues 1–401 (MTRASASGSG…PEKPSFWLTP (401 aa)) form an N-terminal acylcarrier protein transacylase domain (SAT) region. The active-site Nucleophile; for transacylase activity is Cys-157. His-279 functions as the Proton donor/acceptor; for transacylase activity in the catalytic mechanism. One can recognise a Ketosynthase family 3 (KS3) domain in the interval 435 to 862 (SEPIAIVGMS…GSNASMIVTQ (428 aa)). Residues Cys-611, His-746, and His-785 each act as for beta-ketoacyl synthase activity in the active site. Positions 977–1265 (FGGQISRFVG…SSTITVMAGR (289 aa)) are malonyl-CoA:ACP transacylase (MAT). Residues 1384–1515 (WEFVGYQDDE…ATVEMRSSSD (132 aa)) form an N-terminal hotdog fold region. The 315-residue stretch at 1384–1698 (WEFVGYQDDE…YMRVAKASMS (315 aa)) folds into the PKS/mFAS DH domain. A product template (PT) domain region spans residues 1411 to 1696 (YVLSHVIAQT…VQYMRVAKAS (286 aa)). His-1415 serves as the catalytic Proton acceptor; for dehydratase activity. Residues 1550 to 1698 (VEVLQGRNVY…YMRVAKASMS (149 aa)) are C-terminal hotdog fold. Asp-1607 serves as the catalytic Proton donor; for dehydratase activity. The disordered stretch occupies residues 1734 to 1776 (PEVRASSEPGAKVKASKTSKKEKKEKKPVTKAKSKSSKPSGWR). The segment covering 1747–1769 (KASKTSKKEKKEKKPVTKAKSKS) has biased composition (basic residues). A Carrier domain is found at 1776-1850 (RDITEEVRNL…KFVQCVSNAL (75 aa)). An O-(pantetheine 4'-phosphoryl)serine modification is found at Ser-1810. The segment at 1853-1903 (PNAGPAEAEDDEDEEKSDNSSSESASESDDAGSESSDTGILTPTGEEEQPL) is disordered. Residues 1859–1868 (EAEDDEDEEK) are compositionally biased toward acidic residues. The segment at 2115–2294 (NLLAERIGRT…HVDWTDGNLP (180 aa)) is methyltransferase domain. The tract at residues 2360–2379 (SRAEKESGKTQAPHAAPGRR) is disordered. Residues 2387 to 2630 (VTGATGSLGS…QWIPVDYCAA (244 aa)) form an NADPH-binding domain region.

Pantetheine 4'-phosphate serves as cofactor.

The enzyme catalyses (3E,5E,7S)-5,7-dimethyl-2-oxonona-3,5-dienyl-[ACP] + 4 malonyl-CoA + AH2 + S-adenosyl-L-methionine + 3 H(+) = 6-[(3E,5E,7S)-5,7-dimethyl-2-oxonona-3,5-dienyl]-2,4-dihydroxy-3-methylbenzaldehyde + holo-[ACP] + A + S-adenosyl-L-homocysteine + 4 CO2 + 4 CoA + H2O. The protein operates within secondary metabolite biosynthesis. In terms of biological role, iterative polyketide synthase; part of the gene cluster that mediates the biosynthesis of asperfuranone, a probable antitumor agent. The polyketide synthase afoG is responsible for producing the 3,5-dimethyloctadienone moiety from acetyl-CoA, three malonyl-CoA, and two S-adenosyl methionines (SAM). The 3,5-dimethyloctadienone moiety is then loaded onto the SAT domain of afoE and extended with four malonyl-CoA and one SAM, which leads to the formation of 2,4-dihydroxy-6-(5,7-dimethyl-2-oxo-trans-3-trans-5-nonadienyl)-3-methylbenzaldehyde (compound 2) after reductive release and aldol condensation. AfoD is the next enzyme in the biosynthesis sequence and hydroxylates the side chain at the benzylic position of compound 2. After benzylic hydroxylation, a furan ring is formed after five-member ring hemiacetal formation and water elimination. AfoF and afoC are proposed to oxidize the R-diketone proton and to reduce the unconjugated carbonyl group, respectively, to generate asperfuranone. Since no intermediates could be isolated from afoF and afoC deletants, the sequence of these two enzymes is not fully understood. Moreover, since afoC deletant still produces a small amount of asperfuranone, other endogenous oxidoreductases might catalyze the same reaction with much less efficiency. The polypeptide is Iterative polyketide synthase afoE (Emericella nidulans (strain FGSC A4 / ATCC 38163 / CBS 112.46 / NRRL 194 / M139) (Aspergillus nidulans)).